The following is a 260-amino-acid chain: tRNA (guanine-N(1)-)-methyltransferase (260 aa).

Residues Gly-117 and 137-142 (LGDFVL) contribute to the S-adenosyl-L-methionine site.

Belongs to the RNA methyltransferase TrmD family. As to quaternary structure, homodimer.

The protein resides in the cytoplasm. It carries out the reaction guanosine(37) in tRNA + S-adenosyl-L-methionine = N(1)-methylguanosine(37) in tRNA + S-adenosyl-L-homocysteine + H(+). In terms of biological role, specifically methylates guanosine-37 in various tRNAs. This Cupriavidus necator (strain ATCC 17699 / DSM 428 / KCTC 22496 / NCIMB 10442 / H16 / Stanier 337) (Ralstonia eutropha) protein is tRNA (guanine-N(1)-)-methyltransferase.